The chain runs to 227 residues: uncharacterized protein (227 aa).

This is an uncharacterized protein from Caenorhabditis elegans.